Consider the following 455-residue polypeptide: Argininosuccinate lyase (455 aa).

This sequence belongs to the lyase 1 family. Argininosuccinate lyase subfamily.

It is found in the cytoplasm. The catalysed reaction is 2-(N(omega)-L-arginino)succinate = fumarate + L-arginine. It functions in the pathway amino-acid biosynthesis; L-arginine biosynthesis; L-arginine from L-ornithine and carbamoyl phosphate: step 3/3. In Shewanella denitrificans (strain OS217 / ATCC BAA-1090 / DSM 15013), this protein is Argininosuccinate lyase.